Consider the following 380-residue polypeptide: L-lactate dehydrogenase (380 aa).

Positions 1 to 380 constitute an FMN hydroxy acid dehydrogenase domain; that stretch reads MIISSTTDFR…DRSILAKTDR (380 aa). Y24 contributes to the substrate binding site. 2 residues coordinate FMN: S106 and Q127. Y129 provides a ligand contact to substrate. T155 is a binding site for FMN. Substrate is bound at residue R164. FMN is bound at residue K251. H275 functions as the Proton acceptor in the catalytic mechanism. R278 provides a ligand contact to substrate. 306–330 lines the FMN pocket; sequence DGGVRSGLDVVRMLALGAKGVLLGR.

Belongs to the FMN-dependent alpha-hydroxy acid dehydrogenase family. It depends on FMN as a cofactor.

It is found in the cell inner membrane. The catalysed reaction is (S)-lactate + A = pyruvate + AH2. Functionally, catalyzes the conversion of L-lactate to pyruvate. Is coupled to the respiratory chain. This chain is L-lactate dehydrogenase, found in Caulobacter sp. (strain K31).